The primary structure comprises 126 residues: Holo-[acyl-carrier-protein] synthase (126 aa).

2 residues coordinate Mg(2+): aspartate 9 and glutamate 58.

This sequence belongs to the P-Pant transferase superfamily. AcpS family. It depends on Mg(2+) as a cofactor.

Its subcellular location is the cytoplasm. The catalysed reaction is apo-[ACP] + CoA = holo-[ACP] + adenosine 3',5'-bisphosphate + H(+). Transfers the 4'-phosphopantetheine moiety from coenzyme A to a Ser of acyl-carrier-protein. The protein is Holo-[acyl-carrier-protein] synthase of Photorhabdus laumondii subsp. laumondii (strain DSM 15139 / CIP 105565 / TT01) (Photorhabdus luminescens subsp. laumondii).